Reading from the N-terminus, the 87-residue chain is Omega-lycotoxin-Am1g (87 aa).

The first 17 residues, 1–17, serve as a signal peptide directing secretion; it reads MKLSIFFVLFFIAIAYC. Residues 18-40 constitute a propeptide that is removed on maturation; that stretch reads QPEFLDDEEDEVEETLPVAEEGR. 4 cysteine pairs are disulfide-bonded: cysteine 44/cysteine 59, cysteine 51/cysteine 64, cysteine 58/cysteine 84, and cysteine 66/cysteine 82.

It belongs to the neurotoxin omega-lctx family. In terms of tissue distribution, expressed by the venom gland.

The protein resides in the secreted. Functionally, modulates Cav2.1/CACNA1A voltage-gated calcium channels (P/Q-type currents) in rat cerebellar Purkinje cells and hippocampal CA1-CA3 neurons. At saturating concentrations (&gt;10 nM) decelerates activation kinetics and slightly increases peak amplitude without affecting deactivation kinetics. In vivo, does not cause death when intravenously injected into mice. In rat models, through its activity on Cav2.1/CACNA1A, has an ameliorative effect on memory defects provoked by hyperstimulation of N-methyl-D-aspartate receptors (NMDARs) in the hippocampus. This chain is Omega-lycotoxin-Am1g, found in Alopecosa marikovskyi (Wolf spider).